The sequence spans 408 residues: MVQVNENYLKLKAGYLFPEIAKRVKIYSQSNKSAEIIKLGIGDVTEPLPRACIDAMSKALDDMGTAEGFRGYGPEQGYSWLREKISEHDFISRGCQILPEEIFVSDGSKCDSSNILDILGKDNSIAVTDPVYPVYVDSNVMTGRTGDALENGTYQGLTYLAINEGNNFLPELPQKKVDILYLCFPNNPTGATITKEELKKWVDYALQNKSLILFDAAYEAFIQDNDIPHSIYEIEGAKDCAIEFRSFSKNAGFTGVRCAFTVIPKNLKGLSSTNEEIDLWPLWNRRQSTKFNGVSYVVQRGAEAVYSLEGKKEVRGLIDFYMENAKIMKNKLQTAGYKVYGGDNAPYIWIKVPDQMTSWNFFDFLLQNVSVVGTPGSGFGLSGEGYFRLSAFNSRSNVLDAMERIINI.

The substrate site is built by Tyr-15 and Gly-42. Residues Tyr-72, 108–109 (SK), Tyr-132, Asn-187, Tyr-218, and 246–248 (SFS) each bind pyridoxal 5'-phosphate. 3 residues coordinate substrate: Lys-109, Tyr-132, and Asn-187. Position 249 is an N6-(pyridoxal phosphate)lysine (Lys-249). Pyridoxal 5'-phosphate is bound by residues Arg-257 and Asn-292. 2 residues coordinate substrate: Asn-292 and Arg-388.

This sequence belongs to the class-I pyridoxal-phosphate-dependent aminotransferase family. LL-diaminopimelate aminotransferase subfamily. In terms of assembly, homodimer. Pyridoxal 5'-phosphate serves as cofactor.

It carries out the reaction (2S,6S)-2,6-diaminopimelate + 2-oxoglutarate = (S)-2,3,4,5-tetrahydrodipicolinate + L-glutamate + H2O + H(+). Its pathway is amino-acid biosynthesis; L-lysine biosynthesis via DAP pathway; LL-2,6-diaminopimelate from (S)-tetrahydrodipicolinate (aminotransferase route): step 1/1. Its function is as follows. Involved in the synthesis of meso-diaminopimelate (m-DAP or DL-DAP), required for both lysine and peptidoglycan biosynthesis. Catalyzes the direct conversion of tetrahydrodipicolinate to LL-diaminopimelate. This Prochlorococcus marinus (strain MIT 9312) protein is LL-diaminopimelate aminotransferase.